The primary structure comprises 346 residues: Superficial pseudohyphal growth protein 1 (346 aa).

Residues 289-308 are disordered; sequence NFGEDEDNEEDNEDDLPDAA. A compositionally biased stretch (acidic residues) spans 291 to 305; that stretch reads GEDEDNEEDNEDDLP.

It localises to the nucleus. Its function is as follows. Probable transcription factor required for superficial pseudohyphal development in response to nitrogen starvation. This chain is Superficial pseudohyphal growth protein 1 (SFG1), found in Saccharomyces cerevisiae (strain ATCC 204508 / S288c) (Baker's yeast).